Consider the following 412-residue polypeptide: Proteasome-activating nucleotidase (412 aa).

Residues Glu-15–Pro-73 are a coiled coil. ATP contacts are provided by residues Gly-197–Leu-202 and His-336. Residues Met-410–Ala-412 form a docks into pockets in the proteasome alpha-ring to cause gate opening region.

This sequence belongs to the AAA ATPase family. Homohexamer. The hexameric complex has a two-ring architecture resembling a top hat that caps the 20S proteasome core at one or both ends. Upon ATP-binding, the C-terminus of PAN interacts with the alpha-rings of the proteasome core by binding to the intersubunit pockets.

The protein localises to the cytoplasm. ATPase which is responsible for recognizing, binding, unfolding and translocation of substrate proteins into the archaeal 20S proteasome core particle. Is essential for opening the gate of the 20S proteasome via an interaction with its C-terminus, thereby allowing substrate entry and access to the site of proteolysis. Thus, the C-termini of the proteasomal ATPase function like a 'key in a lock' to induce gate opening and therefore regulate proteolysis. Unfolding activity requires energy from ATP hydrolysis, whereas ATP binding alone promotes ATPase-20S proteasome association which triggers gate opening, and supports translocation of unfolded substrates. In Methanoculleus marisnigri (strain ATCC 35101 / DSM 1498 / JR1), this protein is Proteasome-activating nucleotidase.